The following is a 530-amino-acid chain: T-box transcription factor TBX21 (530 aa).

The tract at residues 1–55 (MGIVEPGCGDMLTGTEPMPSDEGRGPGADQQHRFFYPEPGAQDPTDRRAGSSLGT) is disordered. The residue at position 52 (S52) is a Phosphoserine. At T55 the chain carries Phosphothreonine. A phosphotyrosine mark is found at Y76 and Y117. The segment at residues 140–325 (LSNHLLWSKF…NNPFAKGFRE (186 aa)) is a DNA-binding region (T-box). Y219 carries the post-translational modification Phosphotyrosine; by ABL1. S224 carries the post-translational modification Phosphoserine. Y265 is modified (phosphotyrosine; by ABL1). The residue at position 302 (T302) is a Phosphothreonine. At Y304 the chain carries Phosphotyrosine; by ABL1. Residue K313 forms a Glycyl lysine isopeptide (Lys-Gly) (interchain with G-Cter in ubiquitin) linkage. Residues 444–530 (AGWFRPMRTL…EGQFYNYFPN (87 aa)) are disordered. Positions 462–482 (SEEQGSSPSLWPEVTSLQPEP) are enriched in polar residues. Over residues 498-515 (SPYPSSGDSSSPAGAPSP) the composition is skewed to low complexity. At S508 the chain carries Phosphoserine. A Phosphotyrosine; by ITK modification is found at Y525.

As to quaternary structure, interacts with RUNX1 and RUNX3. Interacts with ITK. The phosphorylated form (at Tyr-525) interacts with GATA3. Interacts with ABL1. Interacts with RELA. The phosphorylated form (at Thr-302) interacts with NFATC2. Interacts with KDM6B. Interacts with SMARCA4 in a KDM6B-dependent manner. Interacts with CCTN1 and CDK9. Interacts with USP10. Post-translationally, phosphorylations at Ser-52, Tyr-76, Ser-224 and Ser-508 are regulated by mTORC1. Phosphorylation at Tyr-525 is essential for its interaction GATA3. Phosphorylation at Tyr-219, Tyr-265 and Tyr-304 enhances its transcriptional activator activity. Phosphorylation at Thr-302 is required for its interaction with NFATC2. Ubiquitinated at Lys-313, leading to its degradation by the proteasome. Ubiquitination is essential for controlling protein stability, binding to the T-box-binding element of the IFN-gamma promoter, and for interaction with NFATC2 through induction of phosphorylation at Thr-302. Deubiquitinated by USP10 leading to its stabilization. T-cell specific. Expressed in regulatory T (TReg) cells.

It localises to the nucleus. Functionally, lineage-defining transcription factor which initiates Th1 lineage development from naive Th precursor cells both by activating Th1 genetic programs and by repressing the opposing Th2 and Th17 genetic programs. Activates transcription of a set of genes important for Th1 cell function, including those encoding IFN-gamma and the chemokine receptor CXCR3. Activates IFNG and CXCR3 genes in part by recruiting chromatin remodeling complexes including KDM6B, a SMARCA4-containing SWI/SNF-complex, and an H3K4me2-methyltransferase complex to their promoters and all of these complexes serve to establish a more permissive chromatin state conducive with transcriptional activation. Can activate Th1 genes also via recruitment of Mediator complex and P-TEFb (composed of CDK9 and CCNT1/cyclin-T1) in the form of the super elongation complex (SEC) to super-enhancers and associated genes in activated Th1 cells. Inhibits the Th17 cell lineage commitment by blocking RUNX1-mediated transactivation of Th17 cell-specific transcriptinal regulator RORC. Inhibits the Th2 cell lineage commitment by suppressing the production of Th2 cytokines, such as IL-4, IL-5, and IL- 13, via repression of transcriptional regulators GATA3 and NFATC2. Protects Th1 cells from amplifying aberrant type-I IFN response in an IFN-gamma abundant microenvironment by acting as a repressor of type-I IFN transcription factors and type-I IFN- stimulated genes. Acts as a regulator of antiviral B-cell responses; controls chronic viral infection by promoting the antiviral antibody IgG2a isotype switching and via regulation of a broad antiviral gene expression program. This is T-box transcription factor TBX21 (Tbx21) from Mus musculus (Mouse).